Consider the following 208-residue polypeptide: ATP-dependent Clp protease proteolytic subunit (208 aa).

Residue Ser-105 is the Nucleophile of the active site. His-130 is a catalytic residue.

The protein belongs to the peptidase S14 family. As to quaternary structure, fourteen ClpP subunits assemble into 2 heptameric rings which stack back to back to give a disk-like structure with a central cavity, resembling the structure of eukaryotic proteasomes.

The protein resides in the cytoplasm. It carries out the reaction Hydrolysis of proteins to small peptides in the presence of ATP and magnesium. alpha-casein is the usual test substrate. In the absence of ATP, only oligopeptides shorter than five residues are hydrolyzed (such as succinyl-Leu-Tyr-|-NHMec, and Leu-Tyr-Leu-|-Tyr-Trp, in which cleavage of the -Tyr-|-Leu- and -Tyr-|-Trp bonds also occurs).. In terms of biological role, cleaves peptides in various proteins in a process that requires ATP hydrolysis. Has a chymotrypsin-like activity. Plays a major role in the degradation of misfolded proteins. The sequence is that of ATP-dependent Clp protease proteolytic subunit from Xylella fastidiosa (strain M23).